Consider the following 468-residue polypeptide: 6-phospho-beta-galactosidase (468 aa).

Q19, H116, N159, E160, and N297 together coordinate D-galactose 6-phosphate. E160 (proton donor) is an active-site residue. E375 serves as the catalytic Nucleophile. The D-galactose 6-phosphate site is built by S428, W429, K435, and Y437.

It belongs to the glycosyl hydrolase 1 family.

It carries out the reaction a 6-phospho-beta-D-galactoside + H2O = D-galactose 6-phosphate + an alcohol. It participates in carbohydrate metabolism; lactose degradation; D-galactose 6-phosphate and beta-D-glucose from lactose 6-phosphate: step 1/1. In Streptococcus pyogenes serotype M5 (strain Manfredo), this protein is 6-phospho-beta-galactosidase.